The chain runs to 298 residues: Elongation factor Ts (298 aa).

An involved in Mg(2+) ion dislocation from EF-Tu region spans residues 79–82 (TDFV).

The protein belongs to the EF-Ts family.

The protein resides in the cytoplasm. Its function is as follows. Associates with the EF-Tu.GDP complex and induces the exchange of GDP to GTP. It remains bound to the aminoacyl-tRNA.EF-Tu.GTP complex up to the GTP hydrolysis stage on the ribosome. The protein is Elongation factor Ts (tsf) of Mycoplasma pneumoniae (strain ATCC 29342 / M129 / Subtype 1) (Mycoplasmoides pneumoniae).